The primary structure comprises 682 residues: E3 ubiquitin ligase Rnf157 (682 aa).

The N-myristoyl glycine moiety is linked to residue G2. Residues 277-317 (CVVCLSDVRDTLILPCRHCASCNVHCADTLRYQANNCPICR) form an RING-type; degenerate zinc finger. The short motif at 330–333 (RKKL) is the D-box 1 element. Disordered stretches follow at residues 440 to 604 (QNSS…VQED) and 655 to 682 (NTQR…PLAV). The span at 479-538 (ESENLTLSSSGAVDQSSCTGTPLSSTISSPEDPASSSLAQSVMSMASSQISTDTVSSMSG) shows a compositional bias: polar residues. Over residues 585–597 (QDAEGNDIMEEED) the composition is skewed to acidic residues. The D-box 2 signature appears at 658–661 (RRRL). 3 positions are modified to phosphoserine: S662, S664, and S665.

Interacts with APBB1. Interacts with CHD1; CHD1-binding controls RNF157 stability. Also interacts with ATRN, MEGF8, TECR, MSI2, PLRG1, BYSL, MTERF3, PSMA1, MRPS18B, PRPF4, FASTKD2, SLC25A1, SMU1, CNOT9, MRPS2, MAGT1, FXR2, EMD, PSMD8, HDAC1, RAN, HSD17B12, TXNDC5 and MRPL19. Predominantly expressed in the brain.

The protein localises to the cytoplasm. It catalyses the reaction S-ubiquitinyl-[E2 ubiquitin-conjugating enzyme]-L-cysteine + [acceptor protein]-L-lysine = [E2 ubiquitin-conjugating enzyme]-L-cysteine + N(6)-ubiquitinyl-[acceptor protein]-L-lysine.. Its function is as follows. E3 ubiquitin ligase that ubiquitinates APBB1 for its degradation by the proteasome and thus prevents apoptosis and promotes survival of neurons. Has a dual role in neurons as it is also required for dendrite growth and maintenance for which its ligase activity is not critical. May act as a scaffold molecule to regulate this process. Acts as a downstream effector of the interconnected PI3K and MAPK signaling pathways and thus participates in the regulation of the cell cycle. In Rattus norvegicus (Rat), this protein is E3 ubiquitin ligase Rnf157 (Rnf157).